The sequence spans 119 residues: Large ribosomal subunit protein bL20 (119 aa).

Belongs to the bacterial ribosomal protein bL20 family.

Its function is as follows. Binds directly to 23S ribosomal RNA and is necessary for the in vitro assembly process of the 50S ribosomal subunit. It is not involved in the protein synthesizing functions of that subunit. This is Large ribosomal subunit protein bL20 from Nitrosospira multiformis (strain ATCC 25196 / NCIMB 11849 / C 71).